We begin with the raw amino-acid sequence, 1113 residues long: Cytospin-A (1113 aa).

The interval 1–160 (MKKSVRPAAS…KSKSDGQISD (160 aa)) is disordered. Over residues 59–103 (ASCNAVSKSKRTTSVGTTASTLDSKPKTASGTTSKRLASSLSKET) the composition is skewed to polar residues. Residues 145 to 154 (SEGRMSKSKS) are compositionally biased toward basic and acidic residues. Residues 220–259 (AADVESTLILLQEQNQAIREELNLLKSENRMLKDRLNALG) adopt a coiled-coil conformation. The disordered stretch occupies residues 284–374 (AGSGQSDGGG…RRGSSGNASE (91 aa)). A compositionally biased stretch (low complexity) spans 338-358 (SSDDALDAPSGASSSSESECA). 2 coiled-coil regions span residues 379-433 (CLTE…MDSL) and 473-791 (MELE…RGRV). Disordered stretches follow at residues 766–785 (QEKN…RKQD), 832–902 (FDSA…PTYP), 914–957 (GSAA…DGAS), and 972–997 (ALAS…RKDP). Low complexity predominate over residues 834–845 (SASQGPPSSGAS). Pro residues predominate over residues 856–867 (PRTPLSPSPMKT). The segment covering 925-940 (QRVSNMDSTKAISVSR) has biased composition (polar residues). Basic and acidic residues predominate over residues 941–951 (RSSEEMKRDMA). Residues 972-981 (ALASSSPTAS) are compositionally biased toward low complexity. The 106-residue stretch at 1007–1112 (GSKRNALLKW…YVTAIYKYFE (106 aa)) folds into the Calponin-homology (CH) domain.

The protein belongs to the cytospin-A family. May interact with both microtubules and actin cytoskeleton.

It is found in the cytoplasm. Its subcellular location is the cytoskeleton. The protein resides in the spindle. The protein localises to the cell junction. It localises to the gap junction. Involved in cytokinesis and spindle organization. May play a role in actin cytoskeleton organization and microtubule stabilization and hence required for proper cell adhesion and migration. This is Cytospin-A (specc1l) from Tetraodon nigroviridis (Spotted green pufferfish).